Here is a 178-residue protein sequence, read N- to C-terminus: Cytochrome b6-f complex iron-sulfur subunit (178 aa).

A helical transmembrane segment spans residues 20 to 42 (LLTFGTATGVALGALYPVANYFM). Positions 65 to 161 (KTGWLATHQA…VDIEDDAVLV (97 aa)) constitute a Rieske domain. [2Fe-2S] cluster contacts are provided by cysteine 107, histidine 109, cysteine 125, and histidine 128. An intrachain disulfide couples cysteine 112 to cysteine 127.

Belongs to the Rieske iron-sulfur protein family. As to quaternary structure, the 4 large subunits of the cytochrome b6-f complex are cytochrome b6, subunit IV (17 kDa polypeptide, PetD), cytochrome f and the Rieske protein, while the 4 small subunits are PetG, PetL, PetM and PetN. The complex functions as a dimer. [2Fe-2S] cluster serves as cofactor.

Its subcellular location is the cellular thylakoid membrane. The enzyme catalyses 2 oxidized [plastocyanin] + a plastoquinol + 2 H(+)(in) = 2 reduced [plastocyanin] + a plastoquinone + 4 H(+)(out). Its function is as follows. Component of the cytochrome b6-f complex, which mediates electron transfer between photosystem II (PSII) and photosystem I (PSI), cyclic electron flow around PSI, and state transitions. In Prochlorococcus marinus (strain MIT 9301), this protein is Cytochrome b6-f complex iron-sulfur subunit.